We begin with the raw amino-acid sequence, 808 residues long: Leucine-rich repeat-containing protein 41 (808 aa).

The segment at Ala-45–Val-54 is interaction with Elongin BC complex. Phosphoserine occurs at positions 155, 276, and 326. Disordered regions lie at residues Ala-269–Pro-289 and Thr-304–Ala-404. A Phosphothreonine modification is found at Thr-327. A compositionally biased stretch (low complexity) spans Pro-357 to Ser-379. Ser-369 carries the phosphoserine modification. Positions Pro-383 to Arg-397 are enriched in basic residues. LRR repeat units follow at residues Trp-483–Leu-503, Ala-514–Leu-526, Phe-527–Ile-551, Ser-609–Val-631, Leu-632–Cys-655, Asn-697–Glu-724, and Ser-727–Phe-748.

As to quaternary structure, part of an E3 ubiquitin-protein ligase complex with Elongin BC (ELOB and ELOC), RBX1 and CUL5. Component of a probable ECS(LRRC41) complex which contains CUL5, RNF7/RBX2, Elongin BC and LRRC41. Interacts with CUL5, RNF7, ELOB and ELOC.

It participates in protein modification; protein ubiquitination. In terms of biological role, probable substrate recognition component of an ECS (Elongin BC-CUL2/5-SOCS-box protein) E3 ubiquitin ligase complex which mediates the ubiquitination and subsequent proteasomal degradation of target proteins. This Rattus norvegicus (Rat) protein is Leucine-rich repeat-containing protein 41 (Lrrc41).